The sequence spans 95 residues: Turripeptide OL184 (95 aa).

In terms of processing, contains 5 disulfide bonds. In terms of tissue distribution, expressed by the venom duct.

The protein localises to the secreted. Acts as a neurotoxin by inhibiting an ion channel. The sequence is that of Turripeptide OL184 from Iotyrris olangoensis (Sea snail).